The sequence spans 282 residues: 4-diphosphocytidyl-2-C-methyl-D-erythritol kinase (282 aa).

The active site involves Lys-9. ATP is bound at residue 98–108; the sequence is PMGGGLGGGSS. Asp-140 is a catalytic residue.

The protein belongs to the GHMP kinase family. IspE subfamily. As to quaternary structure, homodimer.

It carries out the reaction 4-CDP-2-C-methyl-D-erythritol + ATP = 4-CDP-2-C-methyl-D-erythritol 2-phosphate + ADP + H(+). It participates in isoprenoid biosynthesis; isopentenyl diphosphate biosynthesis via DXP pathway; isopentenyl diphosphate from 1-deoxy-D-xylulose 5-phosphate: step 3/6. Its function is as follows. Catalyzes the phosphorylation of the position 2 hydroxy group of 4-diphosphocytidyl-2C-methyl-D-erythritol. In Salmonella agona (strain SL483), this protein is 4-diphosphocytidyl-2-C-methyl-D-erythritol kinase.